We begin with the raw amino-acid sequence, 189 residues long: Protein sisterless A (189 aa).

Residues 93–124 (DCRGSGSGSGSGSGSDVKDAQRQRAESCRKSR) form a disordered region. Residues 108–121 (DVKDAQRQRAESCR) show a composition bias toward basic and acidic residues.

Homodimer. Interacts with dpn (via bHLH motif). Interacts with da (via bHLH motif). Interacts with Bap60. In terms of tissue distribution, localizes to all the embryonic nuclei until nuclear cycle 9, when expression ceases in the prepole cell nuclei. Associates with the somatic nuclei through cycle 10. By nuclear cycle 12, distributes uniformly in the somatic portion of the embryo and no longer associates with the nuclei. After early cycle 14 (beginning of cellularization) there is very little or no expression in the periphery of the embryo or in either the somatic or germ cells. In the yolk, accumulates at the nuclei from nuclear cycle 8 until 10-11 hours after fertilization.

It is found in the nucleus. In terms of biological role, involved in sex determination and dosage compensation. Required for proper expression of Sxl in embryonic somatic cells. Also has an essential function in the yolk nuclei. Involved in endoderm migration and midgut formation. This Drosophila melanogaster (Fruit fly) protein is Protein sisterless A (sisA).